The following is a 623-amino-acid chain: Trehalase (623 aa).

It belongs to the glycosyl hydrolase 15 family. As to quaternary structure, monomer.

The catalysed reaction is alpha,alpha-trehalose + H2O = alpha-D-glucose + beta-D-glucose. Its pathway is glycan degradation; trehalose degradation; D-glucose from alpha,alpha-trehalose: step 1/1. Inhibited by validamycin A. Functionally, catalyzes the hydrolysis of alpha,alpha-trehalose into two molecules of D-glucose. In Thermoplasma volcanium (strain ATCC 51530 / DSM 4299 / JCM 9571 / NBRC 15438 / GSS1), this protein is Trehalase.